The chain runs to 285 residues: 4-diphosphocytidyl-2-C-methyl-D-erythritol kinase (285 aa).

Lys10 is a catalytic residue. 93–103 contacts ATP; that stretch reads PIGGGLGGGSS. Asp135 is an active-site residue.

The protein belongs to the GHMP kinase family. IspE subfamily.

It catalyses the reaction 4-CDP-2-C-methyl-D-erythritol + ATP = 4-CDP-2-C-methyl-D-erythritol 2-phosphate + ADP + H(+). Its pathway is isoprenoid biosynthesis; isopentenyl diphosphate biosynthesis via DXP pathway; isopentenyl diphosphate from 1-deoxy-D-xylulose 5-phosphate: step 3/6. Catalyzes the phosphorylation of the position 2 hydroxy group of 4-diphosphocytidyl-2C-methyl-D-erythritol. The sequence is that of 4-diphosphocytidyl-2-C-methyl-D-erythritol kinase from Ruthia magnifica subsp. Calyptogena magnifica.